The following is a 694-amino-acid chain: Follicle-stimulating hormone receptor (694 aa).

A signal peptide spans 1-17 (MALLLVSLLAFLGSGAG). Intrachain disulfides connect Cys-18/Cys-25 and Cys-23/Cys-32. Residues 18–46 (CHHWLCHCSDRVFLCQDSKVTEIPPDLPR) form the LRRNT domain. Over 18-365 (CHHWLCHCSD…EDIMGYNILR (348 aa)) the chain is Extracellular. LRR repeat units follow at residues 49 to 72 (IELRFVLTKLRVIPQGSFSGFKDL), 73 to 97 (EKIEISQNDVLEVIEADVFSNLPKL), 98 to 118 (HEIRIERANTLLYINPEAFQN), 119 to 143 (LPNLRYLLISNTGIKHLPVVHKIQS), 144 to 169 (LQKVLLDIQDNINLHTIARNSFMGLS), 170 to 192 (FDSLILWLNKNGIQEIHNCAFNG), 193 to 216 (TQLDELNLSDNNNLEELPNDVFRG), 217 to 240 (ASGPVILDISRTKVHSLPSHGLEN), and 241 to 259 (LKKLRARSTYSLKKLPSLD). Residues Asn-191 and Asn-199 are each glycosylated (N-linked (GlcNAc...) asparagine). 4 disulfides stabilise this stretch: Cys-275/Cys-345, Cys-276/Cys-292, Cys-276/Cys-355, and Cys-292/Cys-337. Residues Asn-293 and Asn-311 are each glycosylated (N-linked (GlcNAc...) asparagine). The helical transmembrane segment at 366–386 (VLIWFISILAITGNITVLVIL) threads the bilayer. Residues 387–397 (TTSQYKLTVPR) are Cytoplasmic-facing. The chain crosses the membrane as a helical span at residues 398–420 (FLMCNLAFADLCIGIYLLPIASV). The Extracellular portion of the chain corresponds to 421 to 442 (DIHTKSQYHNYAIDWQTAVGCD). Cys-441 and Cys-516 are joined by a disulfide. A helical membrane pass occupies residues 443–464 (AAGFFTAFASELSVYTLTAIPL). Residues 465–484 (ERWHTITHAMQLERKVQLRH) are Cytoplasmic-facing. Residues 485 to 507 (AASVMVMGWVFAFAAALLPIFGV) form a helical membrane-spanning segment. Residues 508–527 (SSYMKVSICLPIDIDSPLSQ) lie on the Extracellular side of the membrane. A helical membrane pass occupies residues 528 to 549 (LYVMALLVLNVLAFVVICGCYT). The Cytoplasmic portion of the chain corresponds to 550 to 572 (HIYLTVRNPNIVSSSSDTKIAKR). A helical transmembrane segment spans residues 573 to 596 (MATLIFTDFLCMAPISLFAISASL). Over 597–607 (KAPLITVSKAK) the chain is Extracellular. The chain crosses the membrane as a helical span at residues 608–629 (ILLVLFYPINSCANPFLYAIFT). At 630 to 694 (KNFRRDFFIL…LVPLSQSAHN (65 aa)) the chain is on the cytoplasmic side.

Belongs to the G-protein coupled receptor 1 family. FSH/LSH/TSH subfamily. As to quaternary structure, homotrimer. Functions as a homotrimer binding the FSH hormone heterodimer composed of CGA and FSHB. Interacts with ARRB2. Interacts with APPL2; interaction is independent of follicle stimulating hormone stimulation. Post-translationally, N-glycosylated; indirectly required for FSH-binding, possibly via a conformational change that allows high affinity binding of hormone.

It localises to the cell membrane. Functionally, g protein-coupled receptor for follitropin, the follicle-stimulating hormone. Through cAMP production activates the downstream PI3K-AKT and ERK1/ERK2 signaling pathways. The chain is Follicle-stimulating hormone receptor (FSHR) from Mesocricetus auratus (Golden hamster).